A 306-amino-acid polypeptide reads, in one-letter code: ATP phosphoribosyltransferase (306 aa).

This sequence belongs to the ATP phosphoribosyltransferase family.

Its subcellular location is the cytoplasm. It carries out the reaction 1-(5-phospho-beta-D-ribosyl)-ATP + diphosphate = 5-phospho-alpha-D-ribose 1-diphosphate + ATP. It participates in amino-acid biosynthesis; L-histidine biosynthesis; L-histidine from 5-phospho-alpha-D-ribose 1-diphosphate: step 1/9. Functionally, catalyzes the condensation of ATP and 5-phosphoribose 1-diphosphate to form N'-(5'-phosphoribosyl)-ATP (PR-ATP). Has a crucial role in the pathway because the rate of histidine biosynthesis seems to be controlled primarily by regulation of the enzymatic activity. This Candida glabrata (strain ATCC 2001 / BCRC 20586 / JCM 3761 / NBRC 0622 / NRRL Y-65 / CBS 138) (Yeast) protein is ATP phosphoribosyltransferase (HIS1).